An 86-amino-acid chain; its full sequence is Large ribosomal subunit protein bL27 (86 aa).

A disordered region spans residues 1-21 (MAHKKGASSSRNGRDSAAQRL).

Belongs to the bacterial ribosomal protein bL27 family.

The polypeptide is Large ribosomal subunit protein bL27 (rpmA) (Mycobacterium tuberculosis (strain CDC 1551 / Oshkosh)).